Here is a 308-residue protein sequence, read N- to C-terminus: MSLRVTFLGTSGAVPTTRRNTSAVFLRREGDRMLFDCGEGTQRQMMRFGTGFAVSKAFITHLHGDHILGLPGLLQTMDFNDREEPLSVYVPSGKQAELRDLIDTAAGAPSFPVHVNGVSDGQVVVDADDYEIRAFETDHDARSLGYALIEASRKGRFDRERAEELGVPVGPKFQQLHAGEAVELEDGTVVEPEQVVGDPRPGRRVVYTGDTRPTDRTVTVAENADLLIHDATFATDNADRAARTAHSTAAEAADIASRADARRLALVHISSRYAGDPSPIEREADDAFGGEAFVPEDGDTVDIPFPDE.

Positions 61, 63, 65, 66, 139, 210, and 268 each coordinate Zn(2+). Catalysis depends on Asp-65, which acts as the Proton acceptor.

The protein belongs to the RNase Z family. Homodimer. Zn(2+) is required as a cofactor.

The catalysed reaction is Endonucleolytic cleavage of RNA, removing extra 3' nucleotides from tRNA precursor, generating 3' termini of tRNAs. A 3'-hydroxy group is left at the tRNA terminus and a 5'-phosphoryl group is left at the trailer molecule.. Functionally, zinc phosphodiesterase, which displays some tRNA 3'-processing endonuclease activity. Probably involved in tRNA maturation, by removing a 3'-trailer from precursor tRNA. This Natronomonas pharaonis (strain ATCC 35678 / DSM 2160 / CIP 103997 / JCM 8858 / NBRC 14720 / NCIMB 2260 / Gabara) (Halobacterium pharaonis) protein is Ribonuclease Z.